Here is a 71-residue protein sequence, read N- to C-terminus: MPIIKVRDNEPFDVALRRFKRSCEKAGILSEIRRREFYEKPTTERKRAKASAIKRLTKKLSRENLKRIRLY.

It belongs to the bacterial ribosomal protein bS21 family.

The protein is Small ribosomal subunit protein bS21 of Buchnera aphidicola subsp. Baizongia pistaciae (strain Bp).